The sequence spans 292 residues: AKT-interacting protein homolog B (292 aa).

The tract at residues Met-1–Ile-44 is disordered. A compositionally biased stretch (basic and acidic residues) spans Lys-14 to Ala-23. The UBC core domain occupies Tyr-75–Ser-223.

It belongs to the ubiquitin-conjugating enzyme family. FTS subfamily.

Its subcellular location is the cytoplasm. The protein resides in the cell membrane. Its function is as follows. May function to promote vesicle trafficking and/or fusion. May also regulate apoptosis. This is AKT-interacting protein homolog B (aktip-b) from Xenopus laevis (African clawed frog).